Here is a 378-residue protein sequence, read N- to C-terminus: Glutamate 5-kinase (378 aa).

Lys-19 is an ATP binding site. The substrate site is built by Ser-59, Asp-146, and Asn-158. 178–179 (TD) contributes to the ATP binding site. One can recognise a PUA domain in the interval 285-363 (RGSVTVDPGA…SEFEKLLGYT (79 aa)).

Belongs to the glutamate 5-kinase family.

The protein resides in the cytoplasm. The catalysed reaction is L-glutamate + ATP = L-glutamyl 5-phosphate + ADP. The protein operates within amino-acid biosynthesis; L-proline biosynthesis; L-glutamate 5-semialdehyde from L-glutamate: step 1/2. Functionally, catalyzes the transfer of a phosphate group to glutamate to form L-glutamate 5-phosphate. This chain is Glutamate 5-kinase, found in Polaromonas naphthalenivorans (strain CJ2).